The following is a 973-amino-acid chain: Nuclear factor NF-kappa-B p105 subunit (973 aa).

Residues 38-245 (ADGPYLQILE…DAIYDSKAPN (208 aa)) form the RHD domain. At cysteine 60 the chain carries S-nitrosocysteine; alternate. Cysteine 60 carries S-(15-deoxy-Delta12,14-prostaglandin J2-9-yl)cysteine; alternate lipidation. Lysine 324 participates in a covalent cross-link: Glycyl lysine isopeptide (Lys-Gly) (interchain with G-Cter in SUMO2). Position 336 is a phosphoserine (serine 336). The short motif at 359 to 364 (QRKRQK) is the Nuclear localization signal element. The tract at residues 371–394 (DSFGGGSGAGAGGGGMFGSGGGGG) is GRR. The tract at residues 434 to 467 (TINTKFKNEPRDCAKSDDREILNPPEKETQGEGP) is disordered. The interval 435–973 (INTKFKNEPR…GQDGPIEGKI (539 aa)) is interaction with CFLAR. Basic and acidic residues predominate over residues 439-463 (FKNEPRDCAKSDDREILNPPEKETQ). Residue lysine 440 is modified to N6-acetyllysine. Phosphoserine is present on serine 449. ANK repeat units lie at residues 540-570 (NGDS…SISD), 579-608 (LYQT…DLSL), 612-641 (WGNS…AALL), 648-677 (EGLN…EVNA), 682-711 (SGRT…ALVD), and 716-745 (DGTT…DPLV). An essential for interaction with HIF1AN region spans residues 648–682 (EGLNAIHIAVMSNSLSCLQLLVAAGAEVNAQEQKS). At asparagine 676 the chain carries (3S)-3-hydroxyasparagine; by HIF1AN. Phosphoserine is present on serine 757. An ANK 7 repeat occupies 769 to 799 (PGTTPLDMAANWQVFDILNGKPYEPVFTSDD). A Death domain is found at 803-890 (QGDIKQLTED…EAIEVIQAAF (88 aa)). Phosphoserine is present on serine 898. Serine 912 carries the phosphoserine; by GSK3-beta; in vitro modification. At serine 928 the chain carries Phosphoserine. Phosphoserine; by IKKB is present on residues serine 932 and serine 937. The residue at position 942 (serine 942) is a Phosphoserine. Position 948 is a phosphothreonine (threonine 948).

As to quaternary structure, component of the NF-kappa-B p65-p50 complex. Homodimer; component of the NF-kappa-B p50-p50 complex. Component of the NF-kappa-B p105-p50 complex. Component of the NF-kappa-B p50-c-Rel complex. Component of a complex consisting of the NF-kappa-B p50-p50 homodimer and BCL3. Also interacts with MAP3K8. NF-kappa-B p50 subunit interacts with NCOA3 coactivator, which may coactivate NF-kappa-B dependent expression via its histone acetyltransferase activity. Interacts with TSC22D3; this interaction prevents nuclear translocation and DNA-binding. Interacts with SPAG9 and UNC5CL. NFKB1/p105 interacts with CFLAR; the interaction inhibits p105 processing into p50. NFKB1/p105 forms a ternary complex with MAP3K8 and TNIP2. Interacts with GSK3B; the interaction prevents processing of p105 to p50. NFKB1/p50 interacts with NFKBIE. NFKB1/p50 interacts with NFKBIZ. Nuclear factor NF-kappa-B p50 subunit interacts with NFKBID. Directly interacts with MEN1. Interacts with HIF1AN. Interacts with FEM1A; interaction is direct. In terms of processing, generation of the NF-kappa-B p50 (Nuclear factor NF-kappa-B p50 subunit) transcription factor takes place both cotranslationally and post-translationally via non-mutually exclusive mechanisms. A cotranslational processing allows the production of both p50 and p105 (Nuclear factor NF-kappa-B p105 subunit) from a single NFKB1 mRNA. While translation occurs, the particular unfolded structure after the GRR repeat region acts as a substrate for the proteasome, promoting degradation of the C-terminus. The GRR acts as a proteasomal 'stop signal', protecting the region upstream of the GRR from degradation and promoting generation of p50. It is unclear if limited proteasome degradation during cotranslational processing depends on ubiquitination. NF-kappa-B p50 is also generated post-translationally following ubiquitination by the KPC complex, leading to limited processing by the proteasome downstream of the GRR region, thereby generating p50. Post-translationally, phosphorylation at the C-terminus by IKBKB/IKKB acts as a signal for ubiquitination and promotes either complete degradation or processing to generate the NF-kappa-B p50 (Nuclear factor NF-kappa-B p50 subunit). Phosphorylation at Ser-912 primes p105 for proteolytic processing in response to TNF-alpha stimulation. Phosphorylation at Ser-928, Ser-932 and Ser-937 are required for BTRC/BTRCP-mediated ubiquitination and proteolysis. Phosphorylation at Ser-932 is also required for ubiquitination by the KPC complex and limited processing to generate NF-kappa-B p50 (Nuclear factor NF-kappa-B p50 subunit). Polyubiquitinated at multiple Lys residues in the C-terminus. Polyubiquitinated by the SCF(FBXW11) and SCF(BTRC) complexes following phosphorylation at Ser-928, Ser-932 and Ser-937, leading to its complete degradation. In contrast, polyubiquitination by the KPC complex following phosphorylation at Ser-932 leads to limited proteosomal processing and generation of the active NF-kappa-B p50 (Nuclear factor NF-kappa-B p50 subunit). In terms of processing, S-nitrosylation of Cys-60 affects DNA binding. Post-translationally, the covalent modification of cysteine by 15-deoxy-Delta12,14-prostaglandin-J2 is autocatalytic and reversible. It may occur as an alternative to other cysteine modifications, such as S-nitrosylation and S-palmitoylation.

Its subcellular location is the cytoplasm. The protein localises to the nucleus. NF-kappa-B is a pleiotropic transcription factor present in almost all cell types and is the endpoint of a series of signal transduction events that are initiated by a vast array of stimuli related to many biological processes such as inflammation, immunity, differentiation, cell growth, tumorigenesis and apoptosis. NF-kappa-B is a homo- or heterodimeric complex formed by the Rel-like domain-containing proteins RELA/p65, RELB, NFKB1/p105, NFKB1/p50, REL and NFKB2/p52 and the heterodimeric p65-p50 complex appears to be most abundant one. The dimers bind at kappa-B sites in the DNA of their target genes and the individual dimers have distinct preferences for different kappa-B sites that they can bind with distinguishable affinity and specificity. Different dimer combinations act as transcriptional activators or repressors, respectively. NF-kappa-B is controlled by various mechanisms of post-translational modification and subcellular compartmentalization as well as by interactions with other cofactors or corepressors. NF-kappa-B complexes are held in the cytoplasm in an inactive state complexed with members of the NF-kappa-B inhibitor (I-kappa-B) family. In a conventional activation pathway, I-kappa-B is phosphorylated by I-kappa-B kinases (IKKs) in response to different activators, subsequently degraded thus liberating the active NF-kappa-B complex which translocates to the nucleus. NF-kappa-B heterodimeric p65-p50 and RelB-p50 complexes are transcriptional activators. The NF-kappa-B p50-p50 homodimer is a transcriptional repressor, but can act as a transcriptional activator when associated with BCL3. NFKB1 appears to have dual functions such as cytoplasmic retention of attached NF-kappa-B proteins by p105 and generation of p50 by a cotranslational processing. The proteasome-mediated process ensures the production of both p50 and p105 and preserves their independent function, although processing of NFKB1/p105 also appears to occur post-translationally. p50 binds to the kappa-B consensus sequence 5'-GGRNNYYCC-3', located in the enhancer region of genes involved in immune response and acute phase reactions. In a complex with MAP3K8, NFKB1/p105 represses MAP3K8-induced MAPK signaling; active MAP3K8 is released by proteasome-dependent degradation of NFKB1/p105. Its function is as follows. P105 is the precursor of the active p50 subunit (Nuclear factor NF-kappa-B p50 subunit) of the nuclear factor NF-kappa-B. Acts as a cytoplasmic retention of attached NF-kappa-B proteins by p105. Functionally, constitutes the active form, which associates with RELA/p65 to form the NF-kappa-B p65-p50 complex to form a transcription factor. Together with RELA/p65, binds to the kappa-B consensus sequence 5'-GGRNNYYCC-3', located in the enhancer region of genes involved in immune response and acute phase reactions. This chain is Nuclear factor NF-kappa-B p105 subunit (Nfkb1), found in Rattus norvegicus (Rat).